The following is a 408-amino-acid chain: Neutral cholesterol ester hydrolase 1 (408 aa).

The Cytoplasmic segment spans residues 1–4 (MRSS). The chain crosses the membrane as a helical; Signal-anchor for type II membrane protein span at residues 5 to 25 (CVLLTALVALAAYYVYIPLPG). The Lumenal segment spans residues 26–408 (SVSDPWKLML…SYIKWLDQNL (383 aa)). Positions 113–115 (HGG) match the Involved in the stabilization of the negatively charged intermediate by the formation of the oxyanion hole motif. Residue Ser191 is part of the active site. N-linked (GlcNAc...) asparagine glycosylation is found at Asn270 and Asn287. Active-site residues include Asp348 and His378. An N-linked (GlcNAc...) asparagine glycan is attached at Asn389.

Belongs to the 'GDXG' lipolytic enzyme family. In terms of processing, N-glycosylated.

Its subcellular location is the cell membrane. It is found in the microsome. It catalyses the reaction a 1-O-alkyl-2-acetyl-sn-glycerol + H2O = a 1-O-alkyl-sn-glycerol + acetate + H(+). The enzyme catalyses 1-O-hexadecyl-2-acetyl-sn-glycerol + H2O = 1-O-hexadecyl-sn-glycerol + acetate + H(+). The catalysed reaction is a cholesterol ester + H2O = cholesterol + a fatty acid + H(+). It carries out the reaction cholesteryl (9Z-octadecenoate) + H2O = cholesterol + (9Z)-octadecenoate + H(+). Its function is as follows. Hydrolyzes 2-acetyl monoalkylglycerol ether (1-O-alkyl-2-acetyl-sn-glycerol), the penultimate precursor of the pathway for de novo synthesis of platelet-activating factor. May be responsible for the hydrolysis of cholesterol esters (such as cholesteryl (9Z-octadecenoate)) in macrophages. Also involved in organ detoxification by hydrolyzing exogenous organophosphorus compounds. This chain is Neutral cholesterol ester hydrolase 1 (NCEH1), found in Pongo abelii (Sumatran orangutan).